Here is a 100-residue protein sequence, read N- to C-terminus: Small ribosomal subunit protein uS14c (100 aa).

The protein belongs to the universal ribosomal protein uS14 family. Part of the 30S ribosomal subunit.

The protein localises to the plastid. The protein resides in the chloroplast. Functionally, binds 16S rRNA, required for the assembly of 30S particles. This Bigelowiella natans (Pedinomonas minutissima) protein is Small ribosomal subunit protein uS14c.